Consider the following 405-residue polypeptide: Arrestin red cell isoform 2 (405 aa).

This sequence belongs to the arrestin family.

It localises to the cytoplasm. In Oncorhynchus mykiss (Rainbow trout), this protein is Arrestin red cell isoform 2.